Here is a 324-residue protein sequence, read N- to C-terminus: Brorin (324 aa).

A signal peptide spans 1–27; the sequence is MPSSSAMAVGALSSSLLVTCCLMVALC. A disordered region spans residues 37 to 126; sequence AQAPEQPGQE…TPQGEPPAAA (90 aa). Basic and acidic residues-rich tracts occupy residues 44 to 56 and 64 to 78; these read GQEK…RDSP and RASR…DWKS. Residues 92-107 are compositionally biased toward low complexity; the sequence is KQKQAWAAQGGSAKAA. Positions 114 to 116 match the Mediates cell adhesion motif; sequence RGD. 2 consecutive VWFC domains span residues 152–211 and 215–273; these read KGCV…PQCK and NYCE…PICK.

As to quaternary structure, peripherally associated with AMPAR complex. AMPAR complex consists of an inner core made of 4 pore-forming GluA/GRIA proteins (GRIA1, GRIA2, GRIA3 and GRIA4) and 4 major auxiliary subunits arranged in a twofold symmetry. One of the two pairs of distinct binding sites is occupied either by CNIH2, CNIH3 or CACNG2, CACNG3. The other harbors CACNG2, CACNG3, CACNG4, CACNG8 or GSG1L. This inner core of AMPAR complex is complemented by outer core constituents binding directly to the GluA/GRIA proteins at sites distinct from the interaction sites of the inner core constituents. Outer core constituents include at least PRRT1, PRRT2, CKAMP44/SHISA9, FRRS1L and NRN1. The proteins of the inner and outer core serve as a platform for other, more peripherally associated AMPAR constituents, including VWC2. Alone or in combination, these auxiliary subunits control the gating and pharmacology of the AMPAR complex and profoundly impact their biogenesis and protein processing. Predominantly expressed in the brain (at protein level). It is expressed in the neurons but not the glial cells.

It localises to the secreted. Its subcellular location is the extracellular space. The protein resides in the extracellular matrix. It is found in the basement membrane. The protein localises to the synapse. Its function is as follows. BMP antagonist which may play a role in neural development. Promotes cell adhesion. In Mus musculus (Mouse), this protein is Brorin (Vwc2).